Reading from the N-terminus, the 47-residue chain is Large ribosomal subunit protein bL34 (47 aa).

Belongs to the bacterial ribosomal protein bL34 family.

The protein is Large ribosomal subunit protein bL34 of Corynebacterium jeikeium (strain K411).